The primary structure comprises 83 residues: Blackelin-5 (83 aa).

The N-terminal stretch at 1–24 (MSSGGLLLLLGLLTLWEGLTPVSS) is a signal peptide. The BPTI/Kunitz inhibitor domain maps to 31–81 (CELPADSGSCKGNFQAFYYHPVHRTCLEFIYGGCEGNANNFKTIDECKRTC). 3 cysteine pairs are disulfide-bonded: Cys31–Cys81, Cys40–Cys64, and Cys56–Cys77.

It is found in the secreted. Its function is as follows. Serine protease inhibitor. The sequence is that of Blackelin-5 from Pseudechis porphyriacus (Red-bellied black snake).